Consider the following 120-residue polypeptide: uncharacterized protein (120 aa).

In terms of domain architecture, HIT spans 7-120 (VFAKIITKNL…KLIGLINNND (114 aa)). The Histidine triad motif signature appears at 101-105 (HFHFH).

This is an uncharacterized protein from Rickettsia prowazekii (strain Madrid E).